Consider the following 185-residue polypeptide: DNA-directed RNA polymerase 22 kDa subunit (185 aa).

The protein belongs to the poxviridae DNA-directed RNA polymerase 22 kDa subunit family. The DNA-dependent RNA polymerase used for intermediate and late genes expression consists of eight subunits Rpo30/OPG66, Rpo7/OPG90, Rpo22/OPG103, Rpo147/OPG105, Rpo18/OPG119, Rpo19/OPG131, Rpo132/OPG151 and Rpo35/OPG156. The same holoenzyme, with the addition of the transcription-specificity factor OPG109, is used for early gene expression.

The protein resides in the virion. The catalysed reaction is RNA(n) + a ribonucleoside 5'-triphosphate = RNA(n+1) + diphosphate. Its function is as follows. Part of the DNA-dependent RNA polymerase which catalyzes the transcription of viral DNA into RNA using the four ribonucleoside triphosphates as substrates. Responsible for the transcription of early, intermediate and late genes. DNA-dependent RNA polymerase associates with the early transcription factor (ETF), itself composed of OPG118 and OPG133, thereby allowing the early genes transcription. Late transcription, and probably also intermediate transcription, require newly synthesized RNA polymerase. The sequence is that of DNA-directed RNA polymerase 22 kDa subunit (OPG103) from Cynomys gunnisoni (Gunnison's prairie dog).